The following is a 288-amino-acid chain: MSEDEFFGGDNEAVWNGSRFSDSPEFQTLKEEVAAELFEINGQISTLQQFTATLKSFIDRGDVSAKVVERINKRSVAKIEEIGGLIKKVNTSVKKMDAIEEASLDKTQIIAREKLVRDVSYSFQEFQGIQRQFTQVMKQVNERAKESLEASEMANDAALLDEEQRQNSSKSTRIPGSQIVIERDPINNEEFAYQQNLIEQRDQEISNIERGITELNEVFKDLGSVVQQQGVLVDNIEANIYTTSDNTQLASDELRKAMRYQKRTSRWRVYLLIVLLVMLLFIFLIMKL.

Residues 1 to 268 are Cytoplasmic-facing; that stretch reads MSEDEFFGGD…RYQKRTSRWR (268 aa). Residues serine 2 and serine 23 each carry the phosphoserine modification. The t-SNARE coiled-coil homology domain occupies 195–257; that stretch reads QNLIEQRDQE…QLASDELRKA (63 aa). A helical; Anchor for type IV membrane protein membrane pass occupies residues 269–288; it reads VYLLIVLLVMLLFIFLIMKL.

The protein belongs to the syntaxin family. Post-translationally, ubiquitinated.

It localises to the membrane. In terms of biological role, plays a role in the sorting and targeting of vacuolar proteases. The sequence is that of Syntaxin PEP12 (PEP12) from Saccharomyces cerevisiae (strain ATCC 204508 / S288c) (Baker's yeast).